A 662-amino-acid chain; its full sequence is Neurexin-2-beta (662 aa).

Residues 1–10 (MPPGGSGQGG) show a composition bias toward gly residues. Positions 1 to 27 (MPPGGSGQGGCPRRPPALAGPLPPPPP) are disordered. The signal sequence occupies residues 1-46 (MPPGGSGQGGCPRRPPALAGPLPPPPPPPPLPLLLGLLLLLGAAEG). Over 47 to 586 (ARVSSSLSTT…EVIRESSSTT (540 aa)) the chain is Extracellular. In terms of domain architecture, Laminin G-like spans 87-295 (TTYIFGKGGA…HLRLVGEGPS (209 aa)). 2 residues coordinate Ca(2+): D139 and V156. N-linked (GlcNAc...) asparagine glycosylation occurs at N186. Residues I238 and N240 each coordinate Ca(2+). A glycan (O-linked (Xyl...) (heparan sulfate) serine) is linked at S350. 3 disordered regions span residues 408–458 (ATQD…LPPT), 476–496 (LLSP…ATGA), and 530–557 (LGPG…PGFP). A helical transmembrane segment spans residues 587 to 607 (GMVVGIVAAAALCILILLYAM). Over 608 to 662 (YKYRNRDEGSYQVDQSRNYISNSAQSNGAVVKEKAPAAPKTPSKAKKNKDKEYYV) the chain is Cytoplasmic. Positions 629-662 (NSAQSNGAVVKEKAPAAPKTPSKAKKNKDKEYYV) are disordered.

This sequence belongs to the neurexin family. As to quaternary structure, interacts (via cytoplasmic C-terminal region) with CASK. Isoform Beta 4b binds alpha-dystroglycan and neuroligins NLGN1, NLGN2 and NLGN3. Interacts with CBLN1, CBLN2 and, less avidly, with CBLN4. Interacts with CLSTN3. Post-translationally, O-glycosylated; contains heparan sulfate. Heparan sulfate attachment is required for synapse development by mediating interactions with neuroligins. In terms of tissue distribution, brain (neuronal synapse).

The protein resides in the presynaptic cell membrane. In terms of biological role, neuronal cell surface protein that may be involved in cell recognition and cell adhesion. The chain is Neurexin-2-beta (Nrxn2) from Rattus norvegicus (Rat).